The primary structure comprises 199 residues: Superoxide dismutase [Fe] (199 aa).

Residues His-27, His-74, Asp-158, and His-162 each coordinate Fe cation.

This sequence belongs to the iron/manganese superoxide dismutase family. In terms of assembly, homodimer. It depends on Fe cation as a cofactor.

The enzyme catalyses 2 superoxide + 2 H(+) = H2O2 + O2. Functionally, destroys superoxide anion radicals which are normally produced within the cells and which are toxic to biological systems. The sequence is that of Superoxide dismutase [Fe] (SODB) from Babesia bovis.